Consider the following 789-residue polypeptide: Ent-kaur-16-ene synthase, chloroplastic (789 aa).

The Mg(2+) site is built by Asp536, Asp540, Asn680, Ser684, and Glu688. The DDXXD motif signature appears at 536–540; the sequence is DDFYD.

The protein belongs to the terpene synthase family. It depends on Mg(2+) as a cofactor. Post-translationally, the N-terminus is blocked. Abundant in most tissues. Present in low amounts in mature cotyledons.

It is found in the plastid. Its subcellular location is the chloroplast. The enzyme catalyses ent-copalyl diphosphate = ent-kaur-16-ene + diphosphate. The protein operates within plant hormone biosynthesis; gibberellin biosynthesis. Catalyzes the conversion of ent-copalyl diphosphate to the gibberellin precursor ent-kaur-16-ene. In Cucurbita maxima (Pumpkin), this protein is Ent-kaur-16-ene synthase, chloroplastic.